The following is a 255-amino-acid chain: 4-hydroxy-tetrahydrodipicolinate reductase (255 aa).

NAD(+) is bound by residues 9-14 (GFKGKM), 89-91 (GTT), and 115-118 (APNF). Catalysis depends on H145, which acts as the Proton donor/acceptor. Residue H146 coordinates (S)-2,3,4,5-tetrahydrodipicolinate. K149 (proton donor) is an active-site residue. 155–156 (GT) is a (S)-2,3,4,5-tetrahydrodipicolinate binding site.

The protein belongs to the DapB family.

The protein resides in the cytoplasm. It catalyses the reaction (S)-2,3,4,5-tetrahydrodipicolinate + NAD(+) + H2O = (2S,4S)-4-hydroxy-2,3,4,5-tetrahydrodipicolinate + NADH + H(+). The enzyme catalyses (S)-2,3,4,5-tetrahydrodipicolinate + NADP(+) + H2O = (2S,4S)-4-hydroxy-2,3,4,5-tetrahydrodipicolinate + NADPH + H(+). Its pathway is amino-acid biosynthesis; L-lysine biosynthesis via DAP pathway; (S)-tetrahydrodipicolinate from L-aspartate: step 4/4. Functionally, catalyzes the conversion of 4-hydroxy-tetrahydrodipicolinate (HTPA) to tetrahydrodipicolinate. The sequence is that of 4-hydroxy-tetrahydrodipicolinate reductase from Streptococcus sanguinis (strain SK36).